A 560-amino-acid polypeptide reads, in one-letter code: Mitochondria-eating protein (560 aa).

The interval 1 to 294 (MADNLRKLVS…SHSRNHSRSR (294 aa)) is interaction with YWHAG/14-3-3 protein gamma. 4 positions are modified to phosphoserine: Ser-13, Ser-85, Ser-156, and Ser-159. 2 coiled-coil regions span residues 118–186 (DRNI…SRHR) and 223–248 (DYEKQLRTLKDEIAVLSAEKSVLQGR). Disordered regions lie at residues 178-217 (QAQEESRHRPPEHRSSEKRGSERRRVEPRGADRCGAAQRK) and 243-316 (SVLQ…AKLS). Over residues 181–209 (EESRHRPPEHRSSEKRGSERRRVEPRGAD) the composition is skewed to basic and acidic residues. Low complexity predominate over residues 248 to 262 (RSTRSRSPSPASCSR). A compositionally biased stretch (basic residues) spans 263–293 (SRSHSHSRSRSHSHSRSGSHSRSHSRNHSRS). Positions 300 to 310 (TAVSGVRSPSP) are enriched in polar residues. 3 positions are modified to phosphoserine: Ser-307, Ser-309, and Ser-531.

The protein belongs to the MIEAP family. In terms of assembly, interacts (via coiled-coil domains) with BNIP3L (via BH3 domain). Interacts (via coiled-coil domains) with BNIP3 (via BH3 domain). Interacts with YWHAG/14-3-3 protein gamma; a protein that also plays a role in MALM.

The protein localises to the cytoplasm. Its subcellular location is the cytosol. It is found in the mitochondrion outer membrane. The protein resides in the mitochondrion matrix. Functionally, key regulator of mitochondrial quality that mediates the repairing or degradation of unhealthy mitochondria in response to mitochondrial damage. Mediator of mitochondrial protein catabolic process (also named MALM) by mediating the degradation of damaged proteins inside mitochondria by promoting the accumulation in the mitochondrial matrix of hydrolases that are characteristic of the lysosomal lumen. Also involved in mitochondrion degradation of damaged mitochondria by promoting the formation of vacuole-like structures (named MIV), which engulf and degrade unhealthy mitochondria by accumulating lysosomes. The physical interaction of SPATA18/MIEAP, BNIP3 and BNIP3L/NIX at the mitochondrial outer membrane regulates the opening of a pore in the mitochondrial double membrane in order to mediate the translocation of lysosomal proteins from the cytoplasm to the mitochondrial matrix. Binds cardiolipin. May form molecular condensates (non-membrane-bounded organelles) within mitochondria that compartmentalize and promote cardiolipin metabolism. This chain is Mitochondria-eating protein (SPATA18), found in Sus scrofa (Pig).